A 494-amino-acid polypeptide reads, in one-letter code: Fumarate hydratase, mitochondrial (494 aa).

A mitochondrion-targeting transit peptide spans 1-15 (MLRASATRFLSQAKN). Residues 128 to 130 (SGT), 159 to 162 (HPND), 169 to 171 (SSN), and threonine 217 each bind substrate. Catalysis depends on histidine 218, which acts as the Proton donor/acceptor. The active site involves serine 348. Substrate is bound by residues serine 349 and 354-356 (KVN).

Belongs to the class-II fumarase/aspartase family. Fumarase subfamily. In terms of assembly, homotetramer.

It localises to the mitochondrion matrix. It is found in the cytoplasm. The protein localises to the nucleus. The enzyme catalyses (S)-malate = fumarate + H2O. The protein operates within carbohydrate metabolism; tricarboxylic acid cycle; (S)-malate from fumarate: step 1/1. Catalyzes the reversible stereospecific interconversion of fumarate to L-malate. In mitochondrion, catalyzes the hydration of fumarate to L-malate in the tricarboxylic acid (TCA) cycle to facilitate a transition step in the production of energy in the form of NADH. In cytoplasm and nucleus, involved in DNA repair in response to DNA damage: following DNA double-strand breaks (DSBs), translocates from the cytosol to the nucleus and promotes DNA repair by catalyzing the dehydration of L-malate to fumarate. The protein is Fumarate hydratase, mitochondrial of Rhizopus oryzae (Mucormycosis agent).